A 528-amino-acid polypeptide reads, in one-letter code: Probable cyclic di-GMP phosphodiesterase PdeC (528 aa).

2 helical membrane-spanning segments follow: residues 14–34 and 242–262; these read GIIFLVLFPIILSLWIAFLWA and HLIFALPAGILGSLVLLLLWL. The region spanning 268-520 is the EAL domain; that stretch reads YLSPKRKLQR…VFMQWMEQLP (253 aa).

The protein localises to the cell inner membrane. It carries out the reaction 3',3'-c-di-GMP + H2O = 5'-phosphoguanylyl(3'-&gt;5')guanosine + H(+). In terms of biological role, phosphodiesterase (PDE) that catalyzes the hydrolysis of cyclic-di-GMP (c-di-GMP) to 5'-pGpG. Cyclic-di-GMP is a second messenger which controls cell surface-associated traits in bacteria. Overexpression reduces biofilm formation. The sequence is that of Probable cyclic di-GMP phosphodiesterase PdeC from Escherichia coli (strain K12).